The following is a 94-amino-acid chain: Acylphosphatase (94 aa).

The Acylphosphatase-like domain occupies 8–94; the sequence is TLFIIVHGKV…GRRFKHFAQH (87 aa). Residues Arg23 and Asn41 contribute to the active site. The segment at 69–94 is disordered; the sequence is PPAASVTELESRREDGGRRFKHFAQH. Basic and acidic residues predominate over residues 77-86; it reads LESRREDGGR.

Belongs to the acylphosphatase family.

The enzyme catalyses an acyl phosphate + H2O = a carboxylate + phosphate + H(+). The sequence is that of Acylphosphatase (acyP) from Bordetella avium (strain 197N).